A 126-amino-acid polypeptide reads, in one-letter code: Small ribosomal subunit protein uS12 (126 aa).

Asp89 is subject to 3-methylthioaspartic acid.

It belongs to the universal ribosomal protein uS12 family. As to quaternary structure, part of the 30S ribosomal subunit. Contacts proteins S8 and S17. May interact with IF1 in the 30S initiation complex.

Its function is as follows. With S4 and S5 plays an important role in translational accuracy. Functionally, interacts with and stabilizes bases of the 16S rRNA that are involved in tRNA selection in the A site and with the mRNA backbone. Located at the interface of the 30S and 50S subunits, it traverses the body of the 30S subunit contacting proteins on the other side and probably holding the rRNA structure together. The combined cluster of proteins S8, S12 and S17 appears to hold together the shoulder and platform of the 30S subunit. This is Small ribosomal subunit protein uS12 from Sulfurimonas denitrificans (strain ATCC 33889 / DSM 1251) (Thiomicrospira denitrificans (strain ATCC 33889 / DSM 1251)).